The sequence spans 294 residues: Glyceraldehyde-3-phosphate dehydrogenase (294 aa).

NAD(+) contacts are provided by D19, K63, and T105. Residues 134-136 (SCT), T165, 194-195 (TG), and R217 contribute to the D-glyceraldehyde 3-phosphate site. C135 functions as the Nucleophile in the catalytic mechanism.

The protein belongs to the glyceraldehyde-3-phosphate dehydrogenase family. In terms of assembly, homotetramer.

It is found in the cytoplasm. The enzyme catalyses D-glyceraldehyde 3-phosphate + phosphate + NAD(+) = (2R)-3-phospho-glyceroyl phosphate + NADH + H(+). It functions in the pathway carbohydrate degradation; glycolysis; pyruvate from D-glyceraldehyde 3-phosphate: step 1/5. Its function is as follows. Catalyzes the oxidative phosphorylation of glyceraldehyde 3-phosphate (G3P) to 1,3-bisphosphoglycerate (BPG) using the cofactor NAD. The first reaction step involves the formation of a hemiacetal intermediate between G3P and a cysteine residue, and this hemiacetal intermediate is then oxidized to a thioester, with concomitant reduction of NAD to NADH. The reduced NADH is then exchanged with the second NAD, and the thioester is attacked by a nucleophilic inorganic phosphate to produce BPG. The sequence is that of Glyceraldehyde-3-phosphate dehydrogenase (gap) from Klebsiella aerogenes (Enterobacter aerogenes).